The sequence spans 415 residues: Dynein assembly factor with WD repeat domains 1 (415 aa).

WD repeat units lie at residues 90–129 (AHILPLTNVALNKSGSCFITGSYDRTCKLWDTASGEELNT), 132–174 (GHRN…HTFR), 175–214 (GHTAEIVCLSFNPQSTLVATGSMDTTAKLWNIQNGEEVCT), 217–256 (GHSAEIISLSFNTSGDRIITGSFDHTVVVWDADTGGKVNI), 259–298 (GHCAEISSALFNWDCSLILTGSMDKTCMLWDATNGKCVAT), 301–340 (GHDDEILDSCFDYTGKLIATASADGTARIFSAATRKCIAK), 343–384 (GHEG…QVLE), and 386–415 (HTDEIFSCTFNYKGNIVITGSKDNTCRIWR).

This sequence belongs to the WD repeat WDR69 family. As to quaternary structure, interacts with IFT46.

Its subcellular location is the cytoplasm. The protein resides in the cytoskeleton. It is found in the flagellum basal body. It localises to the flagellum axoneme. Required for axonemal dynein assembly and ciliary motility in ciliated organs, including Kupffer's vesicle, during embryogenesis. Facilitates the onset of robust cilia motility during development. This chain is Dynein assembly factor with WD repeat domains 1 (DAW1), found in Macaca fascicularis (Crab-eating macaque).